Consider the following 760-residue polypeptide: 5-methyltetrahydropteroyltriglutamate--homocysteine methyltransferase (760 aa).

Residues 17–20 (RELK) and lysine 118 contribute to the 5-methyltetrahydropteroyltri-L-glutamate site. Residues 436–438 (IGS) and glutamate 489 each bind L-homocysteine. L-methionine is bound by residues 436–438 (IGS) and glutamate 489. Residues 520-521 (RC) and tryptophan 566 each bind 5-methyltetrahydropteroyltri-L-glutamate. Aspartate 604 serves as a coordination point for L-homocysteine. L-methionine is bound at residue aspartate 604. Glutamate 610 contacts 5-methyltetrahydropteroyltri-L-glutamate. 3 residues coordinate Zn(2+): histidine 646, cysteine 648, and glutamate 670. Residue histidine 699 is the Proton donor of the active site. Cysteine 731 contributes to the Zn(2+) binding site.

This sequence belongs to the vitamin-B12 independent methionine synthase family. Zn(2+) serves as cofactor.

The catalysed reaction is 5-methyltetrahydropteroyltri-L-glutamate + L-homocysteine = tetrahydropteroyltri-L-glutamate + L-methionine. The protein operates within amino-acid biosynthesis; L-methionine biosynthesis via de novo pathway; L-methionine from L-homocysteine (MetE route): step 1/1. In terms of biological role, catalyzes the transfer of a methyl group from 5-methyltetrahydrofolate to homocysteine resulting in methionine formation. The polypeptide is 5-methyltetrahydropteroyltriglutamate--homocysteine methyltransferase (Vibrio parahaemolyticus serotype O3:K6 (strain RIMD 2210633)).